The chain runs to 247 residues: Mitochondrial inner membrane protease ATP23 (247 aa).

The segment at 1-21 (MSVPPPPKEDLIKPNPPKSES) is disordered. His144 provides a ligand contact to a divalent metal cation. Residue Glu145 is part of the active site. A divalent metal cation is bound at residue His148.

Belongs to the peptidase M76 family.

It localises to the mitochondrion inner membrane. Its function is as follows. Has a dual role in the assembly of mitochondrial ATPase. Acts as a protease that removes N-terminal residues of mitochondrial ATPase CF(0) subunit 6 at the intermembrane space side. Also involved in the correct assembly of the membrane-embedded ATPase CF(0) particle, probably mediating association of subunit 6 with the subunit 9 ring. This Kluyveromyces lactis (strain ATCC 8585 / CBS 2359 / DSM 70799 / NBRC 1267 / NRRL Y-1140 / WM37) (Yeast) protein is Mitochondrial inner membrane protease ATP23 (ATP23).